The chain runs to 393 residues: Ubiquitin-like modifier-activating enzyme 5 (393 aa).

ATP contacts are provided by G75, D96, K119, N142, and N175. 2 residues coordinate Zn(2+): C217 and C220. The active-site Glycyl thioester intermediate is C241. Positions 294 and 299 each coordinate Zn(2+).

This sequence belongs to the ubiquitin-activating E1 family. UBA5 subfamily.

Functionally, E1-like enzyme which activates UFM1. The polypeptide is Ubiquitin-like modifier-activating enzyme 5 (Bombyx mori (Silk moth)).